Consider the following 69-residue polypeptide: uncharacterized protein (69 aa).

Residues leucine 22–methionine 48 form a disordered region. Residues threonine 37 to methionine 48 are compositionally biased toward pro residues.

This is an uncharacterized protein from Lepidoptera (butterflies and moths).